The chain runs to 89 residues: UPF0367 protein PCC8801_1959 (89 aa).

Belongs to the UPF0367 family.

The sequence is that of UPF0367 protein PCC8801_1959 from Rippkaea orientalis (strain PCC 8801 / RF-1) (Cyanothece sp. (strain PCC 8801)).